The following is a 400-amino-acid chain: CinA-like protein (400 aa).

It belongs to the CinA family.

This is CinA-like protein from Escherichia coli (strain K12 / MC4100 / BW2952).